Consider the following 84-residue polypeptide: Sulfur carrier protein TusA (84 aa).

Cys21 functions as the Cysteine persulfide intermediate in the catalytic mechanism.

This sequence belongs to the sulfur carrier protein TusA family.

The protein localises to the cytoplasm. In terms of biological role, sulfur carrier protein which probably makes part of a sulfur-relay system. The sequence is that of Sulfur carrier protein TusA from Pseudomonas syringae pv. syringae (strain B728a).